A 147-amino-acid chain; its full sequence is Hemoglobin subunit gamma (147 aa).

Residues 3–147 enclose the Globin domain; the sequence is HFTVEEKAVI…VAIALAHKYH (145 aa). 2 residues coordinate heme b: H64 and H93.

The protein belongs to the globin family. In terms of assembly, heterotetramer of two alpha chains and two gamma chains in fetal hemoglobin (Hb F). In terms of tissue distribution, red blood cells.

Functionally, gamma chains make up the fetal hemoglobin F, in combination with alpha chains. This is Hemoglobin subunit gamma (HBG) from Cheirogaleus medius (Fat-tailed dwarf lemur).